The primary structure comprises 1989 residues: MTKVPPAFDFSFLNDEEARKILQVLERNEELQRAEKDRISKLQKTKRDIRWLQGVTGEWFEEIQRKKFCNETDVSQMLKQPLTYRLSKEMAKNDPIELPTSRSKNVTNQKKPTPFSSRMSFRSSFASLFSFRKSGKETSKLPSLGQKGCDGHAGPPMPVRGAAVQAKIYNSPLENHLVDSTFVPKPAVMREESGMPPPWDASLLENEFFQVLDDLDSKLAQEQSASSVNTRTPLNYGSRTQFGHFYSSGNRHGNITERHKKHYNETSNMSIYDILRPGTPREGFKTFSPRTSTIYDMYRTREPRVFKEDYVQKNTFGSTSLCFDSRQRSALPATGHFTARSLHFPATTQSKSGFIPPRHQQSPKRTPLSSIIWNRSDSSRDRENQEEFLRAPSPMEIDPADKYVYPRGFQENKRYESYHSQNVYQRVSLNAPMENAMSPDTFENSENMPFYHQSNTFTRSFFSNTFGRSGEQRRFGQGPFWGQEKGHSFWSDFHRSRKSFSSSDRDFEMISMEANSVSAIHGHNVSSEHWESFSSGYGTDVSRGQEEPHPWQFDFQRSTLDSMVVSHGNETQLTPHFGTPNVCSMTGSSYHVKSSELVSQQDSSPVEVHINKEASSFGIAQTLASSFKTSFSQISDDRRNPQSPNLQNPTVTLQKIFPNKPASHPMRSHTEVTVTSSNSVDSLPLAKSQPNILVTEVNNEKDLNESISEEDKQLSKMDQTNKAGEIPQPVSQTGISNSLPDFQNPLSQDSAKSNGFGFNASTIISSKKSPRVFSRKDTSKMYIPHTDKSNDIKQDKRFTENRKLGSTASLPFIQEHRTPPSFPRTDQGCHQELTVNNEDISRIITNNHWSSALTDTQNAQYSKCKLTPGHKTSCDSLDLSSAALPDSSPSKNSSLDAPVVPSTTVFSRRSPSDKDPSLGEREEKDNAGKNQKNQFIVSHSENQERNDSPVPTHDEVVDVKCHSHSPFRNERGKGKIRHHISCIEKLSKTESISVPTSDHRSLIEANQSNSKVSELDTIYCTLPRKSSSFLIHGRQSGSKIMAASLRNGPPPFQIKNNVEDAMGNYMLNKFSPSSPESANECSKVLSDSALEAPEATERMTNVKSSGSTSVRKGPLPFLINRAMSCPSGEPHASTGREGRKKPLTSGMDASELTPRAWERIISPVESDSSVRDCSLTKRQHQKENFQEYTEKEGKMAASRRSVFALSNEDPLPFCSDLSGKERGKTLHKVKTTSTFSVSGDEDNVKCLEVVSIYYTLPRKPSKKFCNLLQQYTQNTNLLIESPQVETETFPNALEKDKQNYSTREQSGTPSCENLKMSVNSDQTLTTENMTAFRLSNRGPLAPTLQEMASVEAAVSLPEEESKAREIFSDNLAKTPLGDSENKKERGKKLQSETLHTSLMLQRKNVSEEKSENCQQSINSSNSGPSSLPALSEVNIGNSQTRRSSWECTGSGRAIPFTGSGKCPQKDHTSTAVGDGSSGSQPREGRGDIGTNCQKMTNKTLSHSESQVFALTPALHKLQLGEETQSDEPNLESLQSEPRELPQRSQEANMTESRKAEDEMQKSAWDQPSLPEGNKNKTNLDDLVKGENRSSVKHRLAAMSKASRKFPAKDVSPRRHVATIFPQSGSRSGFDHLSLGTVECNPLFPEPTPKSAESIGESRLSENGKHVKKSENLLPITVLPNREPSTHVSNQKSNSISQRHQNEFKNVSESPSKHENSKDVTAAQNLVRESGAPSPITFTSLREAEFSDNQRRLSPPFPLEPAQKSRVSSPLASFLQQQRSASSLEWEPEPHLYRSKSLKSINVHGDLLRKSHPPKVRERHFSESTSIDNALSRLTLGNEFSVNNGYSRRFRSFSELPSCDGNESWAYRSGTKTGPRSAISIYRPIDYGIFGKEQQLAFLENVKRSLTQGRLWKPSFLKNPGFLKDDLRNPPNPSESLSSNSPSSQVPEDGLSPSEPLNIYEDDPVDSDCDTDTTTDDEYYLDENDKESEL.

The RabBD domain maps to 7–63; that stretch reads AFDFSFLNDEEARKILQVLERNEELQRAEKDRISKLQKTKRDIRWLQGVTGEWFEEI. Disordered regions lie at residues 93–117 and 348–391; these read NDPI…PFSS and TQSK…FLRA. Composition is skewed to polar residues over residues 100–111 and 359–376; these read TSRSKNVTNQKK and HQQS…WNRS. The span at 377–389 shows a compositional bias: basic and acidic residues; the sequence is DSSRDRENQEEFL. A Phosphoserine modification is found at Ser-603. 3 disordered regions span residues 631-651, 806-827, and 882-933; these read FSQI…NPTV, STAS…RTDQ, and AALP…NQKN. The segment covering 641–651 has biased composition (polar residues); that stretch reads PQSPNLQNPTV. Phosphoserine occurs at positions 806 and 809. Over residues 891–909 the composition is skewed to polar residues; that stretch reads KNSSLDAPVVPSTTVFSRR. Residues 910 to 927 show a composition bias toward basic and acidic residues; it reads SPSDKDPSLGEREEKDNA. Ser-1028 and Ser-1086 each carry phosphoserine. Disordered regions lie at residues 1094–1113, 1124–1152, and 1365–1493; these read EATE…VRKG, SCPS…ASEL, and EIFS…TNCQ. Over residues 1098–1110 the composition is skewed to polar residues; it reads RMTNVKSSGSTSV. Position 1124 is a phosphoserine (Ser-1124). Over residues 1379–1390 the composition is skewed to basic and acidic residues; it reads SENKKERGKKLQ. A compositionally biased stretch (low complexity) spans 1416–1431; that stretch reads SINSSNSGPSSLPALS. The segment covering 1434–1447 has biased composition (polar residues); the sequence is NIGNSQTRRSSWEC. Phosphoserine is present on Ser-1505. 2 disordered regions span residues 1521-1590 and 1644-1737; these read EETQ…NRSS and PEPT…PITF. 3 stretches are compositionally biased toward basic and acidic residues: residues 1551 to 1560, 1573 to 1589, and 1658 to 1670; these read ESRKAEDEMQ, NKNK…ENRS, and RLSE…KKSE. Residues 1685-1709 show a composition bias toward polar residues; that stretch reads THVSNQKSNSISQRHQNEFKNVSES. Residues Ser-1753, Ser-1768, Ser-1821, and Ser-1851 each carry the phosphoserine modification. The interval 1921–1989 is disordered; that stretch reads FLKDDLRNPP…LDENDKESEL (69 aa). Residues 1933-1943 are compositionally biased toward low complexity; it reads SESLSSNSPSS. The segment covering 1959-1989 has biased composition (acidic residues); the sequence is YEDDPVDSDCDTDTTTDDEYYLDENDKESEL.

Interacts with RAB27A. In terms of tissue distribution, expressed in keratinocytes.

Functionally, may act as Rab effector protein and play a role in vesicle trafficking. In Homo sapiens (Human), this protein is Exophilin-5.